Consider the following 470-residue polypeptide: Nucleoporin NUP49 (470 aa).

A compositionally biased stretch (polar residues) spans 1–13 (MSLFGTNTTSQTP). Positions 1 to 92 (MSLFGTNTTS…STTTTTSQPQ (92 aa)) are disordered. GLFG repeat units follow at residues 17–20 (GLFG), 45–48 (GLFG), 63–66 (GLFG), 79–82 (GLFG), 96–99 (GLFG), 111–114 (GLFG), 127–130 (GLFG), 142–145 (GLFG), 156–159 (GLFG), 168–171 (GLFG), 181–184 (GLFG), and 193–197 (GLFGQ). Residues 20 to 31 (GTTTSQSAQTGS) show a composition bias toward low complexity. Positions 32-74 (LFGTATSQPQQTGGLFGSTATQTPSSQLQSTGLFGSTTATSQP) are enriched in polar residues. A compositionally biased stretch (low complexity) spans 75–92 (QQTGGLFGSTTTTTSQPQ). Residues 196–221 (GQSTTQPQQQQNATPGLTMGQSTNTQ) are disordered. A compositionally biased stretch (low complexity) spans 197-206 (QSTTQPQQQQ). The span at 207–221 (NATPGLTMGQSTNTQ) shows a compositional bias: polar residues. Coiled-coil stretches lie at residues 239–270 (TRFN…EAVD) and 375–401 (FSKT…AHLT).

It belongs to the nucleoporin GLFG family. Component of the nuclear pore complex (NPC). NPC constitutes the exclusive means of nucleocytoplasmic transport. NPCs allow the passive diffusion of ions and small molecules and the active, nuclear transport receptor-mediated bidirectional transport of macromolecules such as proteins, RNAs, ribonucleoparticles (RNPs), and ribosomal subunits across the nuclear envelope. Due to its 8-fold rotational symmetry, all subunits are present with 8 copies or multiples thereof.

Its subcellular location is the nucleus. The protein resides in the nuclear pore complex. It is found in the nucleus membrane. Functionally, functions as a component of the nuclear pore complex (NPC). NPC components, collectively referred to as nucleoporins (NUPs), can play the role of both NPC structural components and of docking or interaction partners for transiently associated nuclear transport factors. Active directional transport is assured by both, a Phe-Gly (FG) repeat affinity gradient for these transport factors across the NPC and a transport cofactor concentration gradient across the nuclear envelope (GSP1 and GSP2 GTPases associated predominantly with GTP in the nucleus, with GDP in the cytoplasm). NUP49 plays an important role in several nuclear transport pathways including poly(A)+ RNA, tRNA, and pre-ribosome transport. This is Nucleoporin NUP49 (NUP49) from Chaetomium thermophilum (strain DSM 1495 / CBS 144.50 / IMI 039719) (Thermochaetoides thermophila).